Reading from the N-terminus, the 805-residue chain is Transmembrane channel-like protein 6 (805 aa).

Residues 1 to 29 (MAQPLAFILDVPETPGDQGQGPSPYDESE) form a disordered region. The Lumenal portion of the chain corresponds to 1–209 (MAQPLAFILD…SCCGRLRYAC (209 aa)). T89 bears the Phosphothreonine mark. Residue R94 is modified to Omega-N-methylarginine. N-linked (GlcNAc...) asparagine glycosylation is present at N103. T105 carries the post-translational modification Phosphothreonine. The chain crosses the membrane as a helical span at residues 210–230 (VLALHSLGLALLSALQALMPW). The Cytoplasmic portion of the chain corresponds to 231-249 (RYALKRIGGQFGSSVLSYF). A helical membrane pass occupies residues 250-270 (LFLKTLLAFNALLLLLLVAFI). The Lumenal portion of the chain corresponds to 271 to 338 (MGPQVAFPPA…TPRVGGLPYN (68 aa)). N312 carries an N-linked (GlcNAc...) asparagine glycan. The chain crosses the membrane as a helical span at residues 339-359 (MPLAYLSTVGVSFFITCITLV). Topologically, residues 360 to 431 (YSMAHSFGES…RSVCGRLRQA (72 aa)) are cytoplasmic. Residues 432 to 452 (AVLGLVWLLCLGTALGCAVAV) traverse the membrane as a helical segment. Residues 453 to 469 (HVFSEFMIQSPEAAGQE) are Lumenal-facing. The chain crosses the membrane as a helical span at residues 470-490 (AVLLVLPLVVGLLNLGAPYLC). Over 491–505 (RVLAALEPHDSPVLE) the chain is Cytoplasmic. Residues 506–526 (VYVAICRNLILKLAILGTLCY) traverse the membrane as a helical segment. At 527–553 (HWLGRRVGVLQGQCWEDFVGQELYRFL) the chain is on the lumenal side. A helical transmembrane segment spans residues 554-574 (VMDFVLMLLDTLFGELVWRII). Residues 575-604 (SEKKLKRRRKPEFDIARNVLELIYGQTLTW) are Cytoplasmic-facing. The chain crosses the membrane as a helical span at residues 605-625 (LGVLFSPLLPAVQIIKLLLVF). At 626–650 (YVKKTSLLANCQAPRRPWLASHMST) the chain is on the lumenal side. Residues 651–671 (VFLTLLCFPAFLGAAVFLCYA) traverse the membrane as a helical segment. The Cytoplasmic portion of the chain corresponds to 672-722 (VWQVKPSSTCGPFRTLDTMYEAGRVWVRHLEAAGPRVSWLPWVHRYLMENT). The chain crosses the membrane as a helical span at residues 723-743 (FFVFLVSALLLAVIYLNIQVV). Topologically, residues 744–805 (RGQRKVICLL…PALLTDEQDA (62 aa)) are lumenal. The interval 778-805 (KEREERSRVGTTEEAAAPPALLTDEQDA) is disordered.

This sequence belongs to the TMC family. As to quaternary structure, interacts with TMC8. Interacts and forms a complex with TMC8 and CIB1; the interaction stabilizes each component of the complex. Interacts and forms a complex with TMC8 and SLC30A1/ZNT1; the interaction regulates zinc transport into the ER. (Microbial infection) Interacts with human papillomavirus 16/HPV16 protein E5; the interaction alleviates TMC6-mediated transcription factors inhibition. Expressed in placenta, prostate, testis, activated T-lymphocytes and lymphokine-activated killer (LAK) lymphocytes.

The protein localises to the endoplasmic reticulum membrane. The protein resides in the golgi apparatus membrane. Its subcellular location is the nucleus membrane. In terms of biological role, acts as a regulatory protein involved in the regulation of numerous cellular processes. Together with its homolog TMC8/EVER2, forms a complex with CIB1 in lymphocytes and keratynocytes where TMC6 and TMC8 stabilize CIB1 and reciprocally. Together with TMC8, also forms a complex with and activates zinc transporter ZNT1 at the ER membrane of keratynocytes, thereby facilitating zinc uptake into the ER. Down-regulates the activity of transcription factors induced by zinc and cytokines. Also plays a role in thermal sensation by inhibiting the M-channel (KCNQ2-KCNQ3 channel) current in primary sensory neurons. In Homo sapiens (Human), this protein is Transmembrane channel-like protein 6.